The primary structure comprises 60 residues: Small ribosomal subunit protein eS17 (60 aa).

It belongs to the eukaryotic ribosomal protein eS17 family.

The chain is Small ribosomal subunit protein eS17 from Methanosphaera stadtmanae (strain ATCC 43021 / DSM 3091 / JCM 11832 / MCB-3).